The following is a 281-amino-acid chain: Histidine biosynthesis bifunctional protein hisIE, chloroplastic (281 aa).

A chloroplast-targeting transit peptide spans 1-50 (MAVSYNALAQSLARSSCFIPKPYSFRDTKLRSRSNVVFACNDNKNIALQA). A phosphoribosyl-AMP cyclohydrolase region spans residues 51 to 178 (KVDNLLDRIK…NKLALTTLYS (128 aa)). The interval 179–281 (LESIISKRKE…GIEEKQNRTK (103 aa)) is phosphoribosyl-ATP pyrophosphohydrolase.

It in the N-terminal section; belongs to the PRA-CH family. In the C-terminal section; belongs to the PRA-PH family. As to expression, ubiquitously expressed throughout development.

Its subcellular location is the plastid. The protein localises to the chloroplast. The catalysed reaction is 1-(5-phospho-beta-D-ribosyl)-ATP + H2O = 1-(5-phospho-beta-D-ribosyl)-5'-AMP + diphosphate + H(+). It catalyses the reaction 1-(5-phospho-beta-D-ribosyl)-5'-AMP + H2O = 1-(5-phospho-beta-D-ribosyl)-5-[(5-phospho-beta-D-ribosylamino)methylideneamino]imidazole-4-carboxamide. The protein operates within amino-acid biosynthesis; L-histidine biosynthesis; L-histidine from 5-phospho-alpha-D-ribose 1-diphosphate: step 2/9. It functions in the pathway amino-acid biosynthesis; L-histidine biosynthesis; L-histidine from 5-phospho-alpha-D-ribose 1-diphosphate: step 3/9. The sequence is that of Histidine biosynthesis bifunctional protein hisIE, chloroplastic (HISN2) from Arabidopsis thaliana (Mouse-ear cress).